Consider the following 570-residue polypeptide: Nucleoprotein (570 aa).

A binding site for the cap structure m7GTP region spans residues 54–236 (LRKTKRTDDD…ITKEESSINI (183 aa)). Residues 332 to 356 (DLTKKPDAVPEPGAAPRPAERKGQN) form a disordered region. The Mg(2+) site is built by Asp-386 and Glu-388. Residues Asp-386 and Glu-388 each coordinate Mn(2+). Zn(2+) is bound by residues Glu-396, Cys-503, His-506, and Cys-531. Asp-535 provides a ligand contact to Mg(2+). Asp-535 contributes to the Mn(2+) binding site.

It belongs to the arenaviridae nucleocapsid protein family. Homomultimerizes to form the nucleocapsid. Binds to viral genomic RNA. Interacts with glycoprotein G2. Interacts with protein Z; this interaction probably directs the encapsidated genome to budding sites. Interacts with protein L; this interaction does not interfere with Z-L interaction. Interacts with host IKBKE (via Protein kinase domain); the interaction inhibits IKBKE kinase activity.

The protein localises to the virion. It is found in the host cytoplasm. Its function is as follows. Encapsidates the genome, protecting it from nucleases. The encapsidated genomic RNA is termed the nucleocapsid (NC). Serves as template for viral transcription and replication. The increased presence of protein N in host cell does not seem to trigger the switch from transcription to replication as observed in other negative strain RNA viruses. Through the interaction with host IKBKE, strongly inhibits the phosphorylation and nuclear translocation of host IRF3, a protein involved in interferon activation pathway, leading to the inhibition of interferon-beta and IRF3-dependent promoters activation. Also encodes a functional 3'-5' exoribonuclease that degrades preferentially dsRNA substrates and thereby participates in the suppression of interferon induction. The sequence is that of Nucleoprotein from Artibeus (neotropical fruit bats).